The chain runs to 380 residues: Cytochrome b (380 aa).

4 helical membrane passes run 33 to 53, 77 to 98, 113 to 133, and 178 to 198; these read FGSL…FLAM, WFIR…YIHV, WNVG…GYVL, and FFAF…VHLL. Heme b-binding residues include H83 and H97. H182 and H196 together coordinate heme b. H201 contacts a ubiquinone. A run of 4 helical transmembrane segments spans residues 226–246, 288–308, 320–340, and 347–367; these read TKDI…VLFA, LGGV…PYLY, LTQL…WIGA, and FITI…ILMP.

It belongs to the cytochrome b family. In terms of assembly, the cytochrome bc1 complex contains 11 subunits: 3 respiratory subunits (MT-CYB, CYC1 and UQCRFS1), 2 core proteins (UQCRC1 and UQCRC2) and 6 low-molecular weight proteins (UQCRH/QCR6, UQCRB/QCR7, UQCRQ/QCR8, UQCR10/QCR9, UQCR11/QCR10 and a cleavage product of UQCRFS1). This cytochrome bc1 complex then forms a dimer. Heme b serves as cofactor.

It localises to the mitochondrion inner membrane. Its function is as follows. Component of the ubiquinol-cytochrome c reductase complex (complex III or cytochrome b-c1 complex) that is part of the mitochondrial respiratory chain. The b-c1 complex mediates electron transfer from ubiquinol to cytochrome c. Contributes to the generation of a proton gradient across the mitochondrial membrane that is then used for ATP synthesis. In Cricetomys emini (Emin's giant pouched rat), this protein is Cytochrome b (MT-CYB).